We begin with the raw amino-acid sequence, 174 residues long: Large ribosomal subunit protein uL15 (174 aa).

Disordered regions lie at residues 1-57 and 147-174; these read MKLH…QMRI and PWVV…PQKA. Residues 21–35 show a composition bias toward gly residues; the sequence is RGIGSGKGKTGGKGM.

This sequence belongs to the universal ribosomal protein uL15 family. In terms of assembly, part of the 50S ribosomal subunit.

In terms of biological role, binds to the 23S rRNA. The sequence is that of Large ribosomal subunit protein uL15 from Roseiflexus sp. (strain RS-1).